Here is a 268-residue protein sequence, read N- to C-terminus: Hydroxyethylthiazole kinase (268 aa).

Met45 serves as a coordination point for substrate. ATP-binding residues include Arg121 and Thr167. Substrate is bound at residue Gly194.

Belongs to the Thz kinase family. Mg(2+) serves as cofactor.

The catalysed reaction is 5-(2-hydroxyethyl)-4-methylthiazole + ATP = 4-methyl-5-(2-phosphooxyethyl)-thiazole + ADP + H(+). The protein operates within cofactor biosynthesis; thiamine diphosphate biosynthesis; 4-methyl-5-(2-phosphoethyl)-thiazole from 5-(2-hydroxyethyl)-4-methylthiazole: step 1/1. Catalyzes the phosphorylation of the hydroxyl group of 4-methyl-5-beta-hydroxyethylthiazole (THZ). The polypeptide is Hydroxyethylthiazole kinase (Bacillus cereus (strain ATCC 10987 / NRS 248)).